The chain runs to 339 residues: D-erythrose-4-phosphate dehydrogenase (339 aa).

11–12 (RI) contributes to the NAD(+) binding site. Substrate contacts are provided by residues 158-160 (SCT), arginine 204, 217-218 (TK), and arginine 240. The active-site Nucleophile is cysteine 159. Position 322 (asparagine 322) interacts with NAD(+).

Belongs to the glyceraldehyde-3-phosphate dehydrogenase family. Epd subfamily. Homotetramer.

Its subcellular location is the cytoplasm. It carries out the reaction D-erythrose 4-phosphate + NAD(+) + H2O = 4-phospho-D-erythronate + NADH + 2 H(+). It functions in the pathway cofactor biosynthesis; pyridoxine 5'-phosphate biosynthesis; pyridoxine 5'-phosphate from D-erythrose 4-phosphate: step 1/5. Its function is as follows. Catalyzes the NAD-dependent conversion of D-erythrose 4-phosphate to 4-phosphoerythronate. The protein is D-erythrose-4-phosphate dehydrogenase of Aliivibrio fischeri (strain MJ11) (Vibrio fischeri).